A 712-amino-acid chain; its full sequence is Lactoperoxidase (712 aa).

The signal sequence occupies residues 1–22; the sequence is MWVCLQLPVFLASVTLFEVAAS. Positions 23 to 100 are excised as a propeptide; sequence DTIAQAASTT…WEESFKRLRR (78 aa). N-linked (GlcNAc...) (complex) asparagine; alternate glycosylation occurs at asparagine 106. A glycan (N-linked (GlcNAc...) (hybrid) asparagine; alternate) is linked at asparagine 106. Cystine bridges form between cysteine 123/cysteine 284, cysteine 132/cysteine 145, cysteine 246/cysteine 256, and cysteine 250/cysteine 274. N-linked (GlcNAc...) (complex) asparagine; alternate glycosylation occurs at asparagine 212. An N-linked (GlcNAc...) (high mannose) asparagine; alternate glycan is attached at asparagine 212. Residue aspartate 225 participates in heme b binding. Histidine 226 functions as the Proton acceptor in the catalytic mechanism. Aspartate 227 provides a ligand contact to Ca(2+). Ca(2+)-binding residues include threonine 301, phenylalanine 303, aspartate 305, and serine 307. Position 315 is a phosphoserine (serine 315). An N-linked (GlcNAc...) (high mannose) asparagine glycan is attached at asparagine 322. The cysteines at positions 354 and 365 are disulfide-linked. The N-linked (GlcNAc...) asparagine glycan is linked to asparagine 358. Glutamate 375 is a binding site for heme b. A glycan (N-linked (GlcNAc...) (complex) asparagine; alternate) is linked at asparagine 449. Asparagine 449 is a glycosylation site (N-linked (GlcNAc...) (hybrid) asparagine; alternate). Asparagine 449 carries an N-linked (GlcNAc...) (high mannose) asparagine; alternate glycan. Histidine 468 serves as a coordination point for heme b. At tyrosine 482 the chain carries 3'-nitrotyrosine. Disulfide bonds link cysteine 573–cysteine 630 and cysteine 671–cysteine 696.

The protein belongs to the peroxidase family. XPO subfamily. It depends on Ca(2+) as a cofactor. Heme b serves as cofactor. As to expression, mammary gland; milk.

The protein localises to the secreted. Its subcellular location is the cytoplasm. It catalyses the reaction 2 a phenolic donor + H2O2 = 2 a phenolic radical donor + 2 H2O. The enzyme catalyses thiocyanate + H2O2 + H(+) = hypothiocyanous acid + H2O. The catalysed reaction is iodide + H2O2 = hypoiodite + H2O. Functionally, heme-containing oxidoreductase which catalyzes the conversion of thiocyanate (SCN(-)) into antimicrobial agent hypothiocyanous acid (OSCN(-)) in the presence of hydrogen peroxide (H2O2). Also involved in the conversion of iodide (I(-)) into hypoiodite (IO(-)) in the presence of H2O2. Responsible for the inactivation of a wide range of micro-organisms and hence, important component of defense mechanism. Shows antibacterial properties against E.coli, K.pneumoniae, P.aeruginosa, S.sonnei, S.saphrophyticus, S.epidermidis and S.dysenteriae. May protect the udder from infection and may promote growth in newborns. May be implicated in airway host defense against infection. May contribute to maintaining an appropriate H2O2 cellular level, therefore protecting cells from H2O2-caused injuries and inflammation. The sequence is that of Lactoperoxidase from Bubalus bubalis (Domestic water buffalo).